The following is a 314-amino-acid chain: tRNA dimethylallyltransferase (314 aa).

An ATP-binding site is contributed by 9 to 16 (GPTAVGKT). 11–16 (TAVGKT) contacts substrate. Residues 34–37 (DSVQ) are interaction with substrate tRNA.

Belongs to the IPP transferase family. Monomer. It depends on Mg(2+) as a cofactor.

The enzyme catalyses adenosine(37) in tRNA + dimethylallyl diphosphate = N(6)-dimethylallyladenosine(37) in tRNA + diphosphate. In terms of biological role, catalyzes the transfer of a dimethylallyl group onto the adenine at position 37 in tRNAs that read codons beginning with uridine, leading to the formation of N6-(dimethylallyl)adenosine (i(6)A). This chain is tRNA dimethylallyltransferase, found in Desulfitobacterium hafniense (strain DSM 10664 / DCB-2).